The sequence spans 124 residues: Ubiquinol-cytochrome-c reductase complex assembly factor 2 (124 aa).

A mitochondrion-targeting transit peptide spans 1-13 (MASLRYRRFLKLC).

The protein localises to the mitochondrion matrix. The protein resides in the mitochondrion nucleoid. Its subcellular location is the mitochondrion. Functionally, required for the assembly of the ubiquinol-cytochrome c reductase complex (mitochondrial respiratory chain complex III or cytochrome b-c1 complex). May play a role in the modulation of respiratory chain activities such as oxygen consumption and ATP production. May be involved in cytochrome b translation and/or stability. This Xenopus tropicalis (Western clawed frog) protein is Ubiquinol-cytochrome-c reductase complex assembly factor 2 (uqcc2).